We begin with the raw amino-acid sequence, 513 residues long: tRNA A64-2'-O-ribosylphosphate transferase (513 aa).

TRNA backbone modifying enzyme that mediates initiator/ elongator tRNA discrimination. This enzyme modifies exclusively the initiator tRNA in position 64 using 5'-phosphoribosyl-1'-pyrophosphate as the modification donor. Recognize the stem-loop IV region that is unique in eukaryotic cytoplasmic initiator tRNAs. The polypeptide is tRNA A64-2'-O-ribosylphosphate transferase (RIT1) (Saccharomyces cerevisiae (strain ATCC 204508 / S288c) (Baker's yeast)).